Reading from the N-terminus, the 115-residue chain is Large ribosomal subunit protein uL22 (115 aa).

This sequence belongs to the universal ribosomal protein uL22 family. In terms of assembly, part of the 50S ribosomal subunit.

This protein binds specifically to 23S rRNA; its binding is stimulated by other ribosomal proteins, e.g. L4, L17, and L20. It is important during the early stages of 50S assembly. It makes multiple contacts with different domains of the 23S rRNA in the assembled 50S subunit and ribosome. Functionally, the globular domain of the protein is located near the polypeptide exit tunnel on the outside of the subunit, while an extended beta-hairpin is found that lines the wall of the exit tunnel in the center of the 70S ribosome. In Ligilactobacillus salivarius (strain UCC118) (Lactobacillus salivarius), this protein is Large ribosomal subunit protein uL22.